Here is a 91-residue protein sequence, read N- to C-terminus: MEACCKKSRKANSDPTRKNWLNLPLLALIKVYRYAISPLLGPRCRFEPTCSSYAEQALIEHGPFKGTMLALSRLSKCHPWHAGGYDPVPKK.

Belongs to the UPF0161 family.

It is found in the cell inner membrane. Its function is as follows. Could be involved in insertion of integral membrane proteins into the membrane. This is Putative membrane protein insertion efficiency factor from Saccharophagus degradans (strain 2-40 / ATCC 43961 / DSM 17024).